We begin with the raw amino-acid sequence, 551 residues long: uncharacterized protein (551 aa).

A compositionally biased stretch (polar residues) spans 1 to 11 (MRRVSLPNQLN). Disordered regions lie at residues 1–22 (MRRV…TRGE) and 523–551 (CDPT…QAFH). Basic and acidic residues predominate over residues 12–22 (ETRRRSPTRGE). Positions 537–551 (QQPQQQQQQQQQAFH) are enriched in low complexity.

It to Synechocystis PCC 6803 sll0335 and to M.tuberculosis Rv2567.

This is an uncharacterized protein from Mycobacterium bovis (strain ATCC BAA-935 / AF2122/97).